We begin with the raw amino-acid sequence, 189 residues long: MTTEVELVVLADSEGNAIGTAPKATVHTKDTPLHFAFSTYILNPRGELLVTRRALSKKTWPGVWTNSMCGHPGPDETNADAIRRRGVDELGLEVDSFLDIQEVLPDYQYRAVDASGIVEWELCPVHLVRLAVGEFVEPLDDEVEEFEWAEPQKLFDAVDATPFVFSPWMVDQLSAPELRQAILEAFDAE.

Residues His27 and His34 each contribute to the Mn(2+) site. The 140-residue stretch at 32–171 (PLHFAFSTYI…PFVFSPWMVD (140 aa)) folds into the Nudix hydrolase domain. Cys69 is a catalytic residue. Position 71 (His71) interacts with Mn(2+). Glu89 contacts Mg(2+). 2 residues coordinate Mn(2+): Glu119 and Glu121. Glu121 is a catalytic residue.

The protein belongs to the IPP isomerase type 1 family. Requires Mg(2+) as cofactor. Mn(2+) serves as cofactor.

Its subcellular location is the cytoplasm. The catalysed reaction is isopentenyl diphosphate = dimethylallyl diphosphate. It functions in the pathway isoprenoid biosynthesis; dimethylallyl diphosphate biosynthesis; dimethylallyl diphosphate from isopentenyl diphosphate: step 1/1. Catalyzes the 1,3-allylic rearrangement of the homoallylic substrate isopentenyl (IPP) to its highly electrophilic allylic isomer, dimethylallyl diphosphate (DMAPP). The sequence is that of Isopentenyl-diphosphate Delta-isomerase from Corynebacterium glutamicum (strain R).